The sequence spans 140 residues: Large ribosomal subunit protein bL17 (140 aa).

This sequence belongs to the bacterial ribosomal protein bL17 family. Part of the 50S ribosomal subunit. Contacts protein L32.

In Rhizorhabdus wittichii (strain DSM 6014 / CCUG 31198 / JCM 15750 / NBRC 105917 / EY 4224 / RW1) (Sphingomonas wittichii), this protein is Large ribosomal subunit protein bL17.